We begin with the raw amino-acid sequence, 243 residues long: Protein DMP8 (243 aa).

A disordered region spans residues 1–37 (MEKTEESVGIRVYTTTTTQNPSPTSSRSPKPVPLSSL). Residues 14–29 (TTTTTQNPSPTSSRSP) show a composition bias toward low complexity. A run of 4 helical transmembrane segments spans residues 70–90 (MLVNFLPTGTLLMFEMVLPTI), 98–118 (GINTLMIHLLLLLCAMSCFFF), 174–194 (VNDFVHSVMSVLVFMAIAFSD), and 212–232 (VMESFPLMVGIVCSALFLVFP).

It belongs to the plant DMP1 protein family. Restricted to flowers.

It localises to the endoplasmic reticulum membrane. The protein localises to the vacuole membrane. In terms of biological role, involved in membrane remodeling. This chain is Protein DMP8, found in Arabidopsis thaliana (Mouse-ear cress).